The sequence spans 397 residues: P2X purinoceptor 3 (397 aa).

Over 1-20 the chain is Cytoplasmic; the sequence is MNCISDFFTYETTKSVVVKS. Residues 21-43 form a helical membrane-spanning segment; it reads WTIGIINRAVQLLIISYFVGWVF. Residues 44–322 lie on the Extracellular side of the membrane; it reads LHEKAYQVRD…AGKFNIIPTI (279 aa). Positions 63 and 65 each coordinate ATP. Intrachain disulfides connect Cys107–Cys153, Cys116–Cys137, and Cys122–Cys147. Position 111 (Glu111) interacts with Mg(2+). N-linked (GlcNAc...) asparagine glycosylation occurs at Asn139. Residue Asp158 coordinates Mg(2+). Asp158 is a binding site for Ca(2+). A glycan (N-linked (GlcNAc...) asparagine) is linked at Asn170. Residue Thr172 coordinates ATP. A glycan (N-linked (GlcNAc...) asparagine) is linked at Asn194. 2 disulfide bridges follow: Cys203–Cys213 and Cys247–Cys256. Residues Ser275, Asn279, and Arg281 each coordinate ATP. Asn290 carries an N-linked (GlcNAc...) asparagine glycan. Residue Lys299 coordinates ATP. Residues 323–341 form a helical membrane-spanning segment; it reads ISSVAAFTSVGVGTVLCDI. The Cytoplasmic portion of the chain corresponds to 342–397; that stretch reads ILLNFLKGADHYKARKFEEVTETTLKGTASTNPVFTSDQATVEKQSTDSGAYSIGH.

It belongs to the P2X receptor family. In terms of assembly, homotrimer. Forms heterotrimer with P2RX2. Heterotrimeric P2RX2/3 has a ligand dose-response profile that is distinct from either homotrimeric P2RX2 or P2RX3.

Its subcellular location is the cell membrane. The catalysed reaction is Ca(2+)(in) = Ca(2+)(out). It carries out the reaction Na(+)(in) = Na(+)(out). Has high sensitivity to ATP. Fast activation by external ATP. Exhibits rapid desensitization. Sensitives to the ATP agonist:alpha/beta-methylene-ATP. Subject to allosteric inhibition by AF-219. Mg(2+) and Ca(2+) slow deactivation of P2RX3. Its function is as follows. Extracellular ATP-activated non-selective cation channel. Plays particularly important role in sensory neurons where its activation is critical for gustatory, nociceptive responses, visceral reflexes and sensory hypersensitization. This is P2X purinoceptor 3 (P2rx3) from Mus musculus (Mouse).